Here is a 153-residue protein sequence, read N- to C-terminus: Regulator of sigma D (153 aa).

The protein belongs to the Rsd/AlgQ family. In terms of assembly, interacts with RpoD.

It is found in the cytoplasm. In terms of biological role, binds RpoD and negatively regulates RpoD-mediated transcription activation by preventing the interaction between the primary sigma factor RpoD with the catalytic core of the RNA polymerase and with promoter DNA. May be involved in replacement of the RNA polymerase sigma subunit from RpoD to RpoS during the transition from exponential growth to the stationary phase. This is Regulator of sigma D from Pectobacterium carotovorum subsp. carotovorum (strain PC1).